The primary structure comprises 432 residues: Asparagine--tRNA ligase (432 aa).

Belongs to the class-II aminoacyl-tRNA synthetase family. As to quaternary structure, homodimer.

It localises to the cytoplasm. The catalysed reaction is tRNA(Asn) + L-asparagine + ATP = L-asparaginyl-tRNA(Asn) + AMP + diphosphate + H(+). The protein is Asparagine--tRNA ligase of Lacticaseibacillus paracasei (strain ATCC 334 / BCRC 17002 / CCUG 31169 / CIP 107868 / KCTC 3260 / NRRL B-441) (Lactobacillus paracasei).